The primary structure comprises 273 residues: Putative phosphoenolpyruvate synthase regulatory protein (273 aa).

153-160 (AVSRAGKT) contributes to the ADP binding site.

It belongs to the pyruvate, phosphate/water dikinase regulatory protein family. PSRP subfamily.

It catalyses the reaction [pyruvate, water dikinase] + ADP = [pyruvate, water dikinase]-phosphate + AMP + H(+). The catalysed reaction is [pyruvate, water dikinase]-phosphate + phosphate + H(+) = [pyruvate, water dikinase] + diphosphate. Bifunctional serine/threonine kinase and phosphorylase involved in the regulation of the phosphoenolpyruvate synthase (PEPS) by catalyzing its phosphorylation/dephosphorylation. In Stenotrophomonas maltophilia (strain R551-3), this protein is Putative phosphoenolpyruvate synthase regulatory protein.